We begin with the raw amino-acid sequence, 253 residues long: 5'-nucleotidase SurE (253 aa).

Residues Asp-8, Asp-9, Ser-39, and Asn-96 each coordinate a divalent metal cation.

The protein belongs to the SurE nucleotidase family. Requires a divalent metal cation as cofactor.

The protein localises to the cytoplasm. The enzyme catalyses a ribonucleoside 5'-phosphate + H2O = a ribonucleoside + phosphate. Nucleotidase that shows phosphatase activity on nucleoside 5'-monophosphates. This is 5'-nucleotidase SurE from Rhodopirellula baltica (strain DSM 10527 / NCIMB 13988 / SH1).